We begin with the raw amino-acid sequence, 419 residues long: MTTQLEQAWELAKQRFAAVGIDVEEALRQLDRLPVSMHCWQGDDVAGFENPEGSLTGGIQSTGNYPGKARNATELRADLEQALRLIPGPKRLNLHAIYLESDTPVARDQIKPEHFKNWVEWAKANRLGLDFNPTCFSHPLSADGFTLSHPDAKIRQFWIDHCKASRRVSAYFGEQLGTPSVMNIWIPDGMKDITVDRLAPRQRLLEALDEVISEKFDPAHHIDAVESKLFGIGAESYTVGSNEFYMGYATSRQTALCLDAGHFHPTEVISDKISAAMLYVPRLLLHVSRPVRWDSDHVVLLDDETQAIASEIVRHNLFDRVHIGLDFFDASINRVAAWVIGTRNMKKALLRALLEPTDQLRQLEASGDYTVRLALLEEQKSLPWQAVWEMYCQRHDTPTGSQWLDSVRTYEKEILSKRS.

Residues H262, D294, and D296 each coordinate Mn(2+).

It belongs to the rhamnose isomerase family. In terms of assembly, homotetramer. The cofactor is Mn(2+).

The protein resides in the cytoplasm. The enzyme catalyses L-rhamnopyranose = L-rhamnulose. The protein operates within carbohydrate degradation; L-rhamnose degradation; glycerone phosphate from L-rhamnose: step 1/3. Its function is as follows. Catalyzes the interconversion of L-rhamnose and L-rhamnulose. The polypeptide is L-rhamnose isomerase (Salmonella enteritidis PT4 (strain P125109)).